The primary structure comprises 835 residues: Disease resistance protein RPP13 (835 aa).

A coiled-coil region spans residues 25 to 41; it reads MAVKEDLEELKTELTCI. The NB-ARC domain maps to 144 to 453; that stretch reads SSLRVRQLRR…AEGFIQGDEE (310 aa). 192–199 contacts ATP; that stretch reads GMGGLGKT.

The protein belongs to the disease resistance NB-LRR family. RPP13 subfamily.

Disease resistance protein. Resistance proteins guard the plant against pathogens that contain an appropriate avirulence protein via an indirect interaction with this avirulence protein. That triggers a defense system including the hypersensitive response, which restricts the pathogen growth. In contrast to other resistance proteins, it works independently of ESD1 and NSD1 proteins and does not require the accumulation of salicylic acid, suggesting the existence of an independent signaling pathway. The specificity to avirulence proteins differs in the different cultivars. In Arabidopsis thaliana (Mouse-ear cress), this protein is Disease resistance protein RPP13 (RPP13).